A 163-amino-acid chain; its full sequence is MLKRSLLFLTVLLLLFSFSSITNEVSASSSFDKGKYKKGDDASYFEPTGPYLMVNVTGVDGKGNELLSPHYVEFPIKPGTTLTKEKIEYYVEWALDATAYKEFRVVELDPSAKIEVTYYDKNKKKEETKSFPITEKGFVVPDLSEHIKNPGFNLITKVVIEKK.

An N-terminal signal peptide occupies residues 1–27; sequence MLKRSLLFLTVLLLLFSFSSITNEVSA.

This sequence belongs to the staphylokinase family.

The protein resides in the secreted. Potent plasminogen activator that converts plasminogen into plasmin. It forms a 1:1 complex with plasmin, which in turn activates other plasminogen molecules. The chain is Staphylokinase from Staphylococcus phage S phi-C (Bacteriophage S phi-C).